Reading from the N-terminus, the 81-residue chain is Antitoxin VapB20 (81 aa).

Antitoxin component of a type II toxin-antitoxin (TA) system. Neutralizes the toxic effect of cognate toxin VapC20. The polypeptide is Antitoxin VapB20 (vapB20) (Mycobacterium tuberculosis (strain CDC 1551 / Oshkosh)).